The primary structure comprises 842 residues: Amyloid-beta A4 precursor protein-binding family A member 1 (842 aa).

Disordered stretches follow at residues 1–121 (MNHL…DESA), 238–349 (RLHH…EKRD), and 366–439 (KTRT…KESR). Residue Ser82 is modified to Phosphoserine. Composition is skewed to basic and acidic residues over residues 106 to 115 (DGYEAERAQD) and 240 to 258 (HHYD…KEAE). Phosphoserine is present on residues Ser246, Ser250, Ser252, Ser267, Ser284, and Ser289. The residue at position 309 (Thr309) is a Phosphothreonine. 2 positions are modified to phosphoserine: Ser317 and Ser372. Phosphothreonine is present on Thr375. Residues 392–403 (PTRDCDDQRPVD) show a composition bias toward basic and acidic residues. Positions 404 to 421 (GDSPSPGSSSPLGAESSS) are enriched in low complexity. 4 positions are modified to phosphoserine: Ser406, Ser408, Ser413, and Ser573. Residues 460-648 (LIDGIIFAAN…LLNTQDMYND (189 aa)) enclose the PID domain. Positions 631-648 (LSQKEYSDLLNTQDMYND) are autoinhibitory helix linker. 2 consecutive PDZ domains span residues 661–746 (DVFI…NIVR) and 752–828 (TVLI…MPAA).

Part of a multimeric complex containing STXBP1 and STX1A. Interacts with STXBP1. Component of the brain-specific heterotrimeric complex (LIN-10-LIN-2-LIN-7 complex) composed of at least APBA1, CASK, and LIN7, which associates with the motor protein KIF17 to transport vesicles along microtubules. Within the complex, interacts (via PDZ domain) with the motor protein KIF17; the interaction is direct and is required for association of KIF17 with the cargo that is to be transported. Binds to the cytoplasmic domain of amyloid protein (APP). Interacts (via PDZ 1 and 2 domains) with FSPB. Isoform 3 interacts (via its truncated PID domain) with active, GTP-bound RAB6A. Also interacts with GTP-bound RAB6B. In terms of tissue distribution, isoform 3 is expressed in brain.

It is found in the cytoplasm. Its subcellular location is the perinuclear region. The protein resides in the nucleus. It localises to the golgi apparatus. Its function is as follows. Putative function in synaptic vesicle exocytosis by binding to Munc18-1, an essential component of the synaptic vesicle exocytotic machinery. May modulate processing of the amyloid-beta precursor protein (APP) and hence formation of AAP-beta. Component of the LIN-10-LIN-2-LIN-7 complex, which associates with the motor protein KIF17 to transport vesicles containing N-methyl-D-aspartate (NMDA) receptor subunit NR2B along microtubules. This chain is Amyloid-beta A4 precursor protein-binding family A member 1, found in Mus musculus (Mouse).